The primary structure comprises 745 residues: Dipeptidyl aminopeptidase 4 (745 aa).

A signal peptide spans 1-22 (MRLALFALFALMTVATALPAHA). 2 residues coordinate substrate: E208 and E209. Residues S613, D689, and H721 each act as charge relay system in the active site.

The protein belongs to the peptidase S9B family. As to quaternary structure, homodimer.

It is found in the cytoplasm. The protein resides in the periplasm. It catalyses the reaction Release of an N-terminal dipeptide, Xaa-Yaa-|-Zaa-, from a polypeptide, preferentially when Yaa is Pro, provided Zaa is neither Pro nor hydroxyproline.. Completely inhibited by the serine protease inhibitor diisopropyl fluorophosphate (DFP) and moderately by N-tosyl-L-phenyl-alanyl chloromethyl ketone (TPCK). Somewhat inhibited by phenylmethanesulfonyl fluoride (PMSF). Activity is not affected by thiol- or metalloprotease inhibitors, such as iodoacetate (IAA), EDTA, N-tosyl-L-lysyl chloromethyl ketone (TLCK), o-phenanthlorine, N-ethylmaleimide (NEM) or dithiothreitol (DTT). Functionally, catalyzes the sequential release of Tyr-Pro, Phe-Pro and Gly-Pro from the N-terminus of peptides and proteins. Is able to cleaves bioactive peptide beta-casomorphin. In Pseudoxanthomonas mexicana, this protein is Dipeptidyl aminopeptidase 4.